We begin with the raw amino-acid sequence, 126 residues long: Pancreatic polypeptide prohormone (126 aa).

A signal peptide spans 1–26; it reads MTATRCCLWLLLLGTCMALLLPEAWG. Position 62 is a tyrosine amide (Tyr-62). The interval 77 to 126 is disordered; that stretch reads RQSHAAAPGGSHRHPPAGLPAAKGGTGVSGSPPKPWDCLPCRAHSLPSQS.

It belongs to the NPY family. Post-translationally, no icosapeptide-like peptide is cleaved from the C-terminal.

The protein localises to the secreted. Its function is as follows. Hormone secreted by pancreatic cells that acts as a regulator of pancreatic and gastrointestinal functions probably by signaling through the G protein-coupled receptor NPY4R2. In Cavia porcellus (Guinea pig), this protein is Pancreatic polypeptide prohormone (PPY).